Reading from the N-terminus, the 264-residue chain is Thymidylate synthase (264 aa).

Residue R21 participates in dUMP binding. H51 is a binding site for (6R)-5,10-methylene-5,6,7,8-tetrahydrofolate. 126 to 127 is a binding site for dUMP; that stretch reads RR. Residue C146 is the Nucleophile of the active site. DUMP contacts are provided by residues 166 to 169, N177, and 207 to 209; these read RSAD and HLY. A (6R)-5,10-methylene-5,6,7,8-tetrahydrofolate-binding site is contributed by D169. S263 is a (6R)-5,10-methylene-5,6,7,8-tetrahydrofolate binding site.

It belongs to the thymidylate synthase family. Bacterial-type ThyA subfamily. Homodimer.

It is found in the cytoplasm. It carries out the reaction dUMP + (6R)-5,10-methylene-5,6,7,8-tetrahydrofolate = 7,8-dihydrofolate + dTMP. It participates in pyrimidine metabolism; dTTP biosynthesis. Functionally, catalyzes the reductive methylation of 2'-deoxyuridine-5'-monophosphate (dUMP) to 2'-deoxythymidine-5'-monophosphate (dTMP) while utilizing 5,10-methylenetetrahydrofolate (mTHF) as the methyl donor and reductant in the reaction, yielding dihydrofolate (DHF) as a by-product. This enzymatic reaction provides an intracellular de novo source of dTMP, an essential precursor for DNA biosynthesis. The sequence is that of Thymidylate synthase from Neisseria meningitidis serogroup B (strain ATCC BAA-335 / MC58).